The primary structure comprises 335 residues: V-set and immunoglobulin domain-containing protein 1 (335 aa).

Positions 1–21 are cleaved as a signal peptide; that stretch reads MFPTMLKIFPILATLAGHVHG. Residues 22–136 enclose the Ig-like V-type domain; that stretch reads VVVTVPEKTV…SQKSVIVNVL (115 aa). Residues 22–233 lie on the Extracellular side of the membrane; it reads VVVTVPEKTV…DLTSMHSDGN (212 aa). Cystine bridges form between C43–C115 and C160–C210. The region spanning 139 to 226 is the Ig-like C2-type domain; the sequence is PSKPFCKIEG…GNSTCELDLT (88 aa). Residues 234–254 form a helical membrane-spanning segment; that stretch reads IVAGALIGAILAAVIICAIVW. At 255-335 the chain is on the cytoplasmic side; it reads VLTKKAKKKK…QKEETAGSSF (81 aa). The interval 266–335 is disordered; sequence SSNEMQVMAQ…QKEETAGSSF (70 aa). A compositionally biased stretch (polar residues) spans 268-306; it reads NEMQVMAQKQSNAEYAQVPNEENTPATAVLPSNATNEQP. A compositionally biased stretch (basic and acidic residues) spans 319–335; sequence NDEKHEVQKEETAGSSF.

In terms of tissue distribution, expressed in thymocytes.

It is found in the membrane. The polypeptide is V-set and immunoglobulin domain-containing protein 1 (VSIG1) (Gallus gallus (Chicken)).